The sequence spans 480 residues: Protein nucleotidyltransferase YdiU (480 aa).

8 residues coordinate ATP: glycine 86, glycine 88, arginine 89, lysine 109, aspartate 121, glycine 122, arginine 172, and arginine 179. Aspartate 248 (proton acceptor) is an active-site residue. Residues asparagine 249 and aspartate 258 each coordinate Mg(2+). Aspartate 258 is an ATP binding site.

It belongs to the SELO family. It depends on Mg(2+) as a cofactor. Mn(2+) serves as cofactor.

It carries out the reaction L-seryl-[protein] + ATP = 3-O-(5'-adenylyl)-L-seryl-[protein] + diphosphate. It catalyses the reaction L-threonyl-[protein] + ATP = 3-O-(5'-adenylyl)-L-threonyl-[protein] + diphosphate. The catalysed reaction is L-tyrosyl-[protein] + ATP = O-(5'-adenylyl)-L-tyrosyl-[protein] + diphosphate. The enzyme catalyses L-histidyl-[protein] + UTP = N(tele)-(5'-uridylyl)-L-histidyl-[protein] + diphosphate. It carries out the reaction L-seryl-[protein] + UTP = O-(5'-uridylyl)-L-seryl-[protein] + diphosphate. It catalyses the reaction L-tyrosyl-[protein] + UTP = O-(5'-uridylyl)-L-tyrosyl-[protein] + diphosphate. Functionally, nucleotidyltransferase involved in the post-translational modification of proteins. It can catalyze the addition of adenosine monophosphate (AMP) or uridine monophosphate (UMP) to a protein, resulting in modifications known as AMPylation and UMPylation. This Enterobacter sp. (strain 638) protein is Protein nucleotidyltransferase YdiU.